The primary structure comprises 171 residues: Methyl-coenzyme M reductase operon protein D (171 aa).

MCR is composed of three subunits: alpha, beta, and gamma. The function of proteins C and D is not known.

The protein is Methyl-coenzyme M reductase operon protein D (mcrD) of Methanosarcina barkeri (strain Fusaro / DSM 804).